The chain runs to 368 residues: uncharacterized protein (368 aa).

Residues 237 to 287 (ESLSIPSRRRPSSIAPIGTRPSRKEIAFSNSSTPTDQTLRPPNPPAANGNA) form a disordered region. The segment covering 238–253 (SLSIPSRRRPSSIAPI) has biased composition (low complexity). A compositionally biased stretch (polar residues) spans 264–276 (FSNSSTPTDQTLR).

This is an uncharacterized protein from Schizosaccharomyces pombe (strain 972 / ATCC 24843) (Fission yeast).